The primary structure comprises 151 residues: Large ribosomal subunit protein bL9 (151 aa).

The protein belongs to the bacterial ribosomal protein bL9 family.

Binds to the 23S rRNA. The sequence is that of Large ribosomal subunit protein bL9 from Lactobacillus johnsonii (strain CNCM I-12250 / La1 / NCC 533).